Consider the following 32-residue polypeptide: Basic phospholipase A2 (32 aa).

Ca(2+) is bound by residues tyrosine 26, glycine 28, and glycine 30.

Belongs to the phospholipase A2 family. Group II subfamily. Ca(2+) is required as a cofactor. In terms of tissue distribution, expressed by the venom gland.

It localises to the secreted. It carries out the reaction a 1,2-diacyl-sn-glycero-3-phosphocholine + H2O = a 1-acyl-sn-glycero-3-phosphocholine + a fatty acid + H(+). Snake venom phospholipase A2 (PLA2) that inhibits neuromuscular transmission by blocking acetylcholine release from the nerve termini. PLA2 catalyzes the calcium-dependent hydrolysis of the 2-acyl groups in 3-sn-phosphoglycerides. This chain is Basic phospholipase A2, found in Gloydius halys (Chinese water mocassin).